Here is a 187-residue protein sequence, read N- to C-terminus: Putative protein YbeM (187 aa).

One can recognise a CN hydrolase domain in the interval 1–163; it reads MMTTILTIHV…PALIMAEVTP (163 aa).

It belongs to the carbon-nitrogen hydrolase superfamily. NIT1/NIT2 family.

Functionally, pseudogene resulting from a nucleotide deletion that introduces a premature stop codon at position 66. This is the C-terminal fragment. The intact protein (AC A0A140NCB4) hydrolyzes deaminated glutathione (dGSH, 2-oxoglutaramate) to alpha-ketoglutarate (alpha-KG) and cysteinylglycine, has less activity against alpha-ketoglutaramate (a-KGM) and no activity on glutathione or L-glutamine. May function as a metabolite repair enzyme. The polypeptide is Putative protein YbeM (ybeM) (Escherichia coli (strain K12)).